Reading from the N-terminus, the 1522-residue chain is Adhesion G protein-coupled receptor B3 (1522 aa).

Residues 1 to 25 form the signal peptide; it reads MKAVRNLLIYIFSTYLLVMFGFNAA. Topologically, residues 26–880 are extracellular; the sequence is QDFWCSTLVK…MESSGTPSVT (855 aa). A CUB domain is found at 30–159; the sequence is CSTLVKGVIY…KSFFEFLVLN (130 aa). N-linked (GlcNAc...) asparagine glycans are attached at residues N51, N54, N82, N105, and N241. TSP type-1 domains are found at residues 291–343, 345–398, 400–453, and 455–508; these read ESGV…ALCP, HGVW…ALCP, DGQW…PECT, and NGQW…QRCP. Cystine bridges form between C303/C336, C307/C342, C318/C326, C357/C392, C361/C397, C372/C382, C412/C447, C416/C452, C427/C437, C467/C502, C471/C507, C482/C492, C514/C549, and C537/C567. N337 is a glycosylation site (N-linked (GlcNAc...) asparagine). N-linked (GlcNAc...) asparagine glycosylation occurs at N418. N-linked (GlcNAc...) asparagine glycosylation occurs at N540. S619 bears the Phosphoserine mark. N-linked (GlcNAc...) asparagine glycans are attached at residues N625, N779, N812, and N828. One can recognise a GAIN-B domain in the interval 693-869; sequence QNSYLMTGNV…AILAQQPREI (177 aa). Disulfide bonds link C819/C851 and C839/C853. A GPS region spans residues 819-869; the sequence is CVLWDDSKSNESLGTWSTQGCKTVLTDASHTKCLCDRLSTFAILAQQPREI. Residues 881 to 901 traverse the membrane as a helical segment; the sequence is LIVGSGLSCLALITLAVVYAA. The Cytoplasmic segment spans residues 902-910; it reads LWRYIRSER. A helical transmembrane segment spans residues 911-931; that stretch reads SIILINFCLSIISSNILILVG. At 932–939 the chain is on the extracellular side; that stretch reads QTQTHNKS. N937 carries N-linked (GlcNAc...) asparagine glycosylation. A helical transmembrane segment spans residues 940–960; the sequence is ICTTTTAFLHFFFLASFCWVL. The Cytoplasmic portion of the chain corresponds to 961-981; the sequence is TEAWQSYMAVTGKIRTRLIRK. A helical transmembrane segment spans residues 982–1002; it reads RFLCLGWGLPALVVATSVGFT. Residues 1003-1023 lie on the Extracellular side of the membrane; it reads RTKGYGTDHYCWLSLEGGLLY. Residues 1024-1044 form a helical membrane-spanning segment; that stretch reads AFVGPAAAVVLVNMVIGILVF. The Cytoplasmic portion of the chain corresponds to 1045–1098; it reads NKLVSRDGILDKKLKHRAGQMSEPHSGLTLKCAKCGVVSTTALSATTASNAMAS. Residues 1099–1119 form a helical membrane-spanning segment; that stretch reads LWSSCVVLPLLALTWMSAVLA. The Extracellular segment spans residues 1120–1125; that stretch reads MTDKRS. The helical transmembrane segment at 1126 to 1146 threads the bilayer; it reads ILFQILFAVFDSLQGFVIVMV. Over 1147–1522 the chain is Cytoplasmic; that stretch reads HCILRREVQD…VQEGDFQTEV (376 aa). Phosphoserine occurs at positions 1220 and 1411.

It belongs to the G-protein coupled receptor 2 family. Adhesion G-protein coupled receptor (ADGR) subfamily. Forms a heterodimer, consisting of a large extracellular region non-covalently linked to a seven-transmembrane moiety. Interacts (via its TSRs) with C1QL1, C1QL2, C1QL3 and C1QL4. Interacts via (C-terminus) with ELMO1, ELMO2 and ELMO3. The endogenous protein is proteolytically cleaved into 2 subunits, an extracellular subunit and a seven-transmembrane subunit. Brain-specific expression.

It localises to the cell membrane. In terms of biological role, receptor that plays a role in the regulation of synaptogenesis and dendritic spine formation at least partly via interaction with ELMO1 and RAC1 activity. Promotes myoblast fusion through ELMO/DOCK1. In Mus musculus (Mouse), this protein is Adhesion G protein-coupled receptor B3 (Adgrb3).